Here is a 593-residue protein sequence, read N- to C-terminus: MKGSIPRPFIDDLLTKSDIVDVINTRVKLKKAGRDYQACCPFHHEKTPSFTVSQKKQFYHCFGCGAHGNAISFLMDYDKLEFIEAIEELAAMAGLEIPYEKRVNHSGKPQANYQTKRNLYELMQEIATFYQNQLPLNTQAQEYLQQRGLSPEIIERFQIGFVPNAMDTVLRKFGVNREEQQKLIELGMLSRNDRGNIYDKFRNRIMFPIRDKRGRTVAFGGRVLTDEKPKYLNSPETITYHKGKELYGLYEALQTNDEPKQLLVVEGYMDVVALAQFGVDYAVASLGTSTTSEQIQLILRSTEQVVCCYDGDRAGRDAAWRALENALPYLEDGRQLKFIFLPDGEEPDTYIRQYGKEKFEEYIESAQSLSEFMFAHLSPQVDFSTKEGRGKLVALAAPLIHQIPGEMLRLSLRNMLAQKLGIFDQTQLENLIPKKLEQANTQQKVTHNKIKKTPMRMVISLLMQNPELVKRMSESGVQALRAEAGFEILEKLTALCRQREGITTGQILEYFRNTSYSNPLEILATWDHLLDESDIINAFSQNYRRLNIQAIERDIEMLIAKERTEGLTNEEKTVLVHLLAGKEQQKKQLVNPL.

The CHC2-type zinc finger occupies 40 to 64; the sequence is CPFHHEKTPSFTVSQKKQFYHCFGC. The Toprim domain maps to 260 to 342; that stretch reads KQLLVVEGYM…GRQLKFIFLP (83 aa). Mg(2+)-binding residues include Glu266, Asp310, and Asp312.

It belongs to the DnaG primase family. Monomer. Interacts with DnaB. Zn(2+) is required as a cofactor. Requires Mg(2+) as cofactor.

The catalysed reaction is ssDNA + n NTP = ssDNA/pppN(pN)n-1 hybrid + (n-1) diphosphate.. Functionally, RNA polymerase that catalyzes the synthesis of short RNA molecules used as primers for DNA polymerase during DNA replication. This is DNA primase from Haemophilus influenzae (strain ATCC 51907 / DSM 11121 / KW20 / Rd).